A 219-amino-acid polypeptide reads, in one-letter code: Claudin-3 (219 aa).

Residues 1–8 (MSMGLEIT) lie on the Cytoplasmic side of the membrane. A helical transmembrane segment spans residues 9–29 (GTSLAVLGWLCTIVCCALPMW). Residues 30 to 80 (RVSAFIGSSIITAQITWEGLWMNCVVQSTGQMQCKMYDSLLALPQDLQAAR) are Extracellular-facing. A helical membrane pass occupies residues 81–101 (ALIVVSILLAAFGLLVALVGA). At 102-115 (QCTNCVQDETAKAK) the chain is on the cytoplasmic side. Residues 116–136 (ITIVAGVLFLLAAVLTLVPVS) form a helical membrane-spanning segment. Over 137-161 (WSANTIIRDFYNPLVPEAQKREMGT) the chain is Extracellular. Residues 162–182 (GLYVGWAAAALQLLGGALLCC) form a helical membrane-spanning segment. Residues 183-219 (SCPPREKYAPTKILYSAPRSTGPGTGTGTAYDRKDYV) are Cytoplasmic-facing. Tyrosine 197 bears the Phosphotyrosine mark. Position 198 is a phosphoserine (serine 198). Positions 218 to 219 (YV) are interactions with TJP1, TJP2 and TJP3.

This sequence belongs to the claudin family. In terms of assembly, can form homo- and heteropolymers with other CLDN. Homopolymers interact with CLDN1 and CLDN2 homopolymers. Interacts in cis (within the same plasma membrane) with CLDN19. Directly interacts with TJP1/ZO-1, TJP2/ZO-2 and TJP3/ZO-3.

It is found in the cell junction. It localises to the tight junction. The protein localises to the cell membrane. In terms of biological role, plays a major role in tight junction-specific obliteration of the intercellular space, through calcium-independent cell-adhesion activity. This Rattus norvegicus (Rat) protein is Claudin-3 (Cldn3).